A 458-amino-acid chain; its full sequence is Na(+)/H(+) antiporter NhaA (458 aa).

The next 12 helical transmembrane spans lie at Phe-27 to Ile-47, Leu-78 to Ile-98, Ile-114 to Phe-134, Gly-143 to Gly-163, Val-172 to Phe-192, Gly-201 to Ala-221, Ser-222 to Val-242, Val-249 to Ile-269, Pro-316 to Ala-336, Phe-346 to Thr-366, Ile-388 to Leu-408, and Ile-421 to Tyr-441.

It belongs to the NhaA Na(+)/H(+) (TC 2.A.33) antiporter family.

It is found in the cell inner membrane. It carries out the reaction Na(+)(in) + 2 H(+)(out) = Na(+)(out) + 2 H(+)(in). In terms of biological role, na(+)/H(+) antiporter that extrudes sodium in exchange for external protons. This is Na(+)/H(+) antiporter NhaA from Bartonella quintana (strain Toulouse) (Rochalimaea quintana).